Here is a 511-residue protein sequence, read N- to C-terminus: MKFFLLLFTIGFCWAQYSPNTQQGRTSIVHLFEWRWVDIALECERYLAPKGFGGVQVSPPNENVAIYNPFRPWWERYQPVSYKLCTRSGNEDEFRNMVTRCNNVGVRIYVDAVINHMCGNAVSAGTSSTCGSYFNPGSRDFPAVPYSGWDFNDGKCKTGSGDIENYNDATQVRDCRLTGLLDLALEKDYVRSKIAEYMNHLIDIGVAGFRLDASKHMWPGDIKAILDKLHNLNSNWFPAGSKPFIYQEVIDLGGEPIKSSDYFGNGRVTEFKYGAKLGTVIRKWNGEKMSYLKNWGEGWGFVPSDRALVFVDNHDNQRGHGAGGASILTFWDARLYKMAVGFMLAHPYGFTRVMSSYRWPRQFQNGNDVNDWVGPPNNNGVIKEVTINPDTTCGNDWVCEHRWRQIRNMVIFRNVVDGQPFTNWYDNGSNQVAFGRGNRGFIVFNNDDWSFSLTLQTGLPAGTYCDVISGDKINGNCTGIKIYVSDDGKAHFSISNSAEDPFIAIHAESKL.

A signal peptide spans 1-15; that stretch reads MKFFLLLFTIGFCWA. The residue at position 16 (Q16) is a Pyrrolidone carboxylic acid. 3 cysteine pairs are disulfide-bonded: C43–C101, C85–C130, and C156–C175. Residues N115, R173, and D182 each coordinate Ca(2+). Residue R210 coordinates chloride. Residue D212 is the Nucleophile of the active site. H216 serves as a coordination point for Ca(2+). The Proton donor role is filled by E248. Positions 313 and 352 each coordinate chloride. Disulfide bonds link C393/C399 and C465/C477. N476 is a glycosylation site (N-linked (GlcNAc...) asparagine).

This sequence belongs to the glycosyl hydrolase 13 family. As to quaternary structure, monomer. Binds to the sea anemone inhibitor helianthamide. Requires Ca(2+) as cofactor. The cofactor is chloride. Detected in pancreas (at protein level).

It is found in the secreted. Its subcellular location is the extracellular space. The catalysed reaction is Endohydrolysis of (1-&gt;4)-alpha-D-glucosidic linkages in polysaccharides containing three or more (1-&gt;4)-alpha-linked D-glucose units.. The sequence is that of Pancreatic alpha-amylase (AMY2A) from Homo sapiens (Human).